Here is a 516-residue protein sequence, read N- to C-terminus: MRPAFIRGKWLSRTLELATGLGRRTCSSRESGREVRVRFAPSPTGFLHLGGLRTALYNYLFAKKHGGAFILRLEDTDRSRLVPGAAESIEDMLEWAGIPPDESPRHGGPCGPYEQSKRLDLYHVAAQALLDSGAAYRCFCTPQRLELLKREAMRNRQTPRYDNRCRHLTPKQVEEKLSRNSPFVIRFFLQEGAQPFQDLVYGWTQHDVASVEGDPVILKGDGFPTYHLANVVDDHHMCVSHVLRGAEWLISTAKHLLLYQALGWQPPQFAHLPLLLNKDGSKLSKRQGDIFIQHYVHSGYLSDALLDLITNCGSGFTENQMGRTVDTLIQQYELGKTSTHSALLDLDKLPEFNRIHLTRWIEGTETRVQLVGQLQVLLKDTYKDLELDEKHIERILLLRKGHLCRLTDLLSPEYSYLWVRPSVTREQLQCLTSEASKVKNLVVRLLQENDSGFTLETLNGELRKQLKQVKDTKYSSAMKLLRVALSGQEHGPSVAEMLLSLGRQESIVRLQNALPD.

The N-terminal 39 residues, 1-39, are a transit peptide targeting the mitochondrion; the sequence is MRPAFIRGKWLSRTLELATGLGRRTCSSRESGREVRVRF. 38–40 lines the L-glutamate pocket; sequence RFA. Positions 43-51 match the 'HIGH' region motif; the sequence is PTGFLHLGG. Residue His-48 coordinates ATP. Residues Glu-74, 226–230, and Arg-244 each bind L-glutamate; that span reads YHLAN. Residues Glu-247 and 282–286 each bind ATP; that span reads KLSKR. The 'KMSKS' region motif lies at 282 to 286; the sequence is KLSKR.

This sequence belongs to the class-I aminoacyl-tRNA synthetase family. Glutamate--tRNA ligase type 1 subfamily.

It is found in the mitochondrion matrix. The enzyme catalyses tRNA(Glx) + L-glutamate + ATP = L-glutamyl-tRNA(Glx) + AMP + diphosphate. It catalyses the reaction tRNA(Glu) + L-glutamate + ATP = L-glutamyl-tRNA(Glu) + AMP + diphosphate. The catalysed reaction is tRNA(Gln) + L-glutamate + ATP = L-glutamyl-tRNA(Gln) + AMP + diphosphate. Its function is as follows. Non-discriminating glutamyl-tRNA synthetase that catalyzes aminoacylation of both mitochondrial tRNA(Glu) and tRNA(Gln) and participates in RNA aminoacylation for mitochondrial protein translation. Attachs glutamate to tRNA(Glu) or tRNA(Gln) in a two-step reaction: glutamate is first activated by ATP to form Glu-AMP and then transferred to the acceptor end of tRNA(Glu) or tRNA(Gln). The sequence is that of Nondiscriminating glutamyl-tRNA synthetase EARS2, mitochondrial from Xenopus tropicalis (Western clawed frog).